A 623-amino-acid chain; its full sequence is tRNA uridine 5-carboxymethylaminomethyl modification enzyme MnmG (623 aa).

An FAD-binding site is contributed by 12-17 (GAGHAG). 272–286 (GPRYCPSIEDKINRF) provides a ligand contact to NAD(+).

Belongs to the MnmG family. As to quaternary structure, homodimer. Heterotetramer of two MnmE and two MnmG subunits. FAD serves as cofactor.

It is found in the cytoplasm. NAD-binding protein involved in the addition of a carboxymethylaminomethyl (cmnm) group at the wobble position (U34) of certain tRNAs, forming tRNA-cmnm(5)s(2)U34. The sequence is that of tRNA uridine 5-carboxymethylaminomethyl modification enzyme MnmG from Christiangramia forsetii (strain DSM 17595 / CGMCC 1.15422 / KT0803) (Gramella forsetii).